We begin with the raw amino-acid sequence, 1086 residues long: Rh5-interacting protein (1086 aa).

The N-terminal stretch at 1–19 (MFRIFFTLLIIILIKKTSA) is a signal peptide. N-linked (GlcNAc...) asparagine glycosylation is found at Asn-103, Asn-144, Asn-228, Asn-303, Asn-334, Asn-480, Asn-498, Asn-506, Asn-526, and Asn-646. EGF-like domains lie at 287–321 (RCTQDICSVNQFCDGENETCTCKTSLLPSAKNNCE) and 325–362 (LCTVLNCPENSTCEQIGNGKKAECKCENGKYYHNNKCY). EGF-like domains are found at residues 636 to 675 (SCSNLCNKCHNNSTCYGNRFNYDCFCDNPYISKYGNKLCE), 679 to 715 (DCESVLCSQNQVCQILPNDKLICQCEEGYKNVKGKCV), 719 to 753 (KCDLSCPSNKVCVIENGKQTCKCSERFVLENGVCI), 818 to 854 (YCKDINCKENEECSIVNFKPECVCKENLKKNNKGECI), 858 to 897 (SCLINEGNCPKDSKCIYREYKPHECVCNKQGHVAVNGKCV), 901 to 938 (KCVHNKKCSENSICVNVMNKEPICVCTYNYYKKDGVCL), and 942 to 979 (PCLKDNGGCSRNSECTFKYSKINCTCKENYKNKDDSCV). Residues Asn-964 and Asn-1021 are each glycosylated (N-linked (GlcNAc...) asparagine).

In terms of assembly, component of the PfRH5 adhesion complex composed of 1 copy of CyRPA, RH5 and RIPR; the complex is formed during merozoite invasion of host erythrocytes specifically at the interface between the parasite and host membranes. Within the complex, interacts with CyRPA. CyRPA recruitment of RIPR to RH5-P113-BSG leads to the formation of the PfRH5 adhesion complex which probably in turn releases RH5 from P113 while maintaining the interaction of the PfRH5 adhesion complex with BSG. In terms of processing, proteolytically cleaved into two chains of 125kDa and 65kDa which remain associated. The cleavage occurs at the schizont stage prior to the release of merozoites. Post-translationally, contains disulfide bonds.

The protein resides in the secreted. Its subcellular location is the cytoplasmic vesicle. The protein localises to the secretory vesicle. It is found in the microneme lumen. It localises to the cell membrane. The protein resides in the host cell membrane. In terms of biological role, essential for the invasion of host erythrocytes by blood stage merozoites. As part of the PfRH5 adhesion complex, facilitates the interaction of RH5 and human BSG required for the Ca(2+) release into the erythrocyte. In Plasmodium falciparum (isolate 3D7), this protein is Rh5-interacting protein (RIPR).